The primary structure comprises 217 residues: Adenylate kinase (217 aa).

10 to 15 (GAGKGT) is a binding site for ATP. Positions 30-59 (STGDMLRAQIKAGTELGMKAKAIMDAGGLV) are NMP. AMP is bound by residues T31, R36, 57 to 59 (GLV), 85 to 88 (GFPR), and Q92. The LID stretch occupies residues 122-159 (GRRVHVASGRTYHVVFNPPKVAGKDDVTGEDLIQRDDD). ATP contacts are provided by residues R123 and 132-133 (TY). Positions 156 and 167 each coordinate AMP. G203 contacts ATP.

It belongs to the adenylate kinase family. In terms of assembly, monomer.

It is found in the cytoplasm. It catalyses the reaction AMP + ATP = 2 ADP. It functions in the pathway purine metabolism; AMP biosynthesis via salvage pathway; AMP from ADP: step 1/1. In terms of biological role, catalyzes the reversible transfer of the terminal phosphate group between ATP and AMP. Plays an important role in cellular energy homeostasis and in adenine nucleotide metabolism. This chain is Adenylate kinase, found in Thiobacillus denitrificans (strain ATCC 25259 / T1).